Here is a 316-residue protein sequence, read N- to C-terminus: MMLDLGNESSVTMFILSGFSEYPHLHAPLFLLFFMIYTVTLIGNLGIIVVRKVNPKLHTPMYFFLSHLSFLDICYSSVFTPKLLEILIVEDRTISFKGCMTQFFLICAFVITEMFMLAVMAYDRFVAVCNPLLYTVSMSPKLCAFLVAGTYMWGVLCSLTITYSLLQLSYCGPNIINHFGCEYSAILSLSCSDPTFSQVVCLTISIFNETCSLLIILASYVFIVVTIIKMPSKGGLQKAFSTCSSHLTAISIFHGIILLLYCVPNSKNSWLVVKVATVLFTVMIPMLNPLIYSLRNKDVKGTVSRLMHLKLQAHST.

The Extracellular portion of the chain corresponds to 1–28 (MMLDLGNESSVTMFILSGFSEYPHLHAP). A glycan (N-linked (GlcNAc...) asparagine) is linked at Asn-7. A helical transmembrane segment spans residues 29–50 (LFLLFFMIYTVTLIGNLGIIVV). Over 51-61 (RKVNPKLHTPM) the chain is Cytoplasmic. A helical transmembrane segment spans residues 62–80 (YFFLSHLSFLDICYSSVFT). Residues 81–99 (PKLLEILIVEDRTISFKGC) are Extracellular-facing. Cys-99 and Cys-181 are joined by a disulfide. Residues 100 to 122 (MTQFFLICAFVITEMFMLAVMAY) form a helical membrane-spanning segment. Residues 123–141 (DRFVAVCNPLLYTVSMSPK) lie on the Cytoplasmic side of the membrane. Residues 142 to 166 (LCAFLVAGTYMWGVLCSLTITYSLL) form a helical membrane-spanning segment. Residues 167–205 (QLSYCGPNIINHFGCEYSAILSLSCSDPTFSQVVCLTIS) lie on the Extracellular side of the membrane. A helical transmembrane segment spans residues 206-228 (IFNETCSLLIILASYVFIVVTII). The Cytoplasmic segment spans residues 229–239 (KMPSKGGLQKA). A helical transmembrane segment spans residues 240–263 (FSTCSSHLTAISIFHGIILLLYCV). The Extracellular segment spans residues 264–268 (PNSKN). The chain crosses the membrane as a helical span at residues 269 to 291 (SWLVVKVATVLFTVMIPMLNPLI). Over 292-316 (YSLRNKDVKGTVSRLMHLKLQAHST) the chain is Cytoplasmic.

The protein belongs to the G-protein coupled receptor 1 family.

Its subcellular location is the cell membrane. In terms of biological role, olfactory receptor. The chain is Olfactory receptor 1165 from Mus musculus (Mouse).